The following is a 308-amino-acid chain: Ribosomal RNA large subunit methyltransferase F (308 aa).

Belongs to the methyltransferase superfamily. METTL16/RlmF family.

It localises to the cytoplasm. The catalysed reaction is adenosine(1618) in 23S rRNA + S-adenosyl-L-methionine = N(6)-methyladenosine(1618) in 23S rRNA + S-adenosyl-L-homocysteine + H(+). Specifically methylates the adenine in position 1618 of 23S rRNA. The chain is Ribosomal RNA large subunit methyltransferase F from Escherichia coli (strain K12 / MC4100 / BW2952).